Consider the following 426-residue polypeptide: Endothelin-1 receptor (426 aa).

The signal sequence occupies residues 1-20 (METFCLKVTFWVALVGYVIG). Residues 21–79 (DHPESYSTNLSTPVDFTTFHGTELSFLVTTHRPTNLALPSNGSMHSYCPQQTKITSAFK) lie on the Extracellular side of the membrane. Asn29 and Asn61 each carry an N-linked (GlcNAc...) asparagine glycan. The chain crosses the membrane as a helical span at residues 80 to 101 (YINTVISCTIFIVGMVGNATLL). Topologically, residues 102-111 (RIIYQNKCMR) are cytoplasmic. Residues 112 to 131 (NGPNALIASLALGDLIYVVI) traverse the membrane as a helical segment. Topologically, residues 132–158 (DLPINVFKLLAGRWPFDHNDFGVFLCK) are extracellular. The cysteines at positions 157 and 238 are disulfide-linked. The chain crosses the membrane as a helical span at residues 159–180 (LFPFLQKSSVGITVLNLCALSV). The Cytoplasmic segment spans residues 181–204 (DRYRAVASWSRVQGIGIPLITAIE). A helical transmembrane segment spans residues 205-228 (IVSIWILSFILAIPEAIGFVMVPF). The Extracellular portion of the chain corresponds to 229 to 255 (EYKGEQHKTCMLNATSKFMEFYQDVKD). A glycan (N-linked (GlcNAc...) asparagine) is linked at Asn241. The helical transmembrane segment at 256–277 (WWLFGFYFCMPLVCTAIFYTLM) threads the bilayer. The Cytoplasmic segment spans residues 278 to 305 (TCEMLNRRNGSLRIALSEHLKQRREVAK). Residues 306–327 (TVFCLVVIFALCWFPLHLSRIL) form a helical membrane-spanning segment. The Extracellular segment spans residues 328 to 346 (KKTVYDEMDKNRCELLSFL). Residues 347–371 (RLMDYIGINLATMNSCINPIALYFV) form a helical membrane-spanning segment. Residues 372 to 426 (SKKFKNCFQSCLCCCCYQSKSLMTSVPMNGTSIQWKNHEQNNHNTERSSHKDSIN) are Cytoplasmic-facing. Position 424 is a phosphoserine (Ser424).

The protein belongs to the G-protein coupled receptor 1 family. Endothelin receptor subfamily. EDNRA sub-subfamily. Interacts with HDAC7 and KAT5.

It localises to the cell membrane. Receptor for endothelin-1. Mediates its action by association with G proteins that activate a phosphatidylinositol-calcium second messenger system. The rank order of binding affinities for ET-A is: ET1 &gt; ET2 &gt;&gt; ET3. In Canis lupus familiaris (Dog), this protein is Endothelin-1 receptor.